Reading from the N-terminus, the 332-residue chain is Transcription factor HBP-1b(c38) (332 aa).

Residues 1–48 (MAEASPRTETSTDDTDENLMLEPGNAALAVVSDSSDRSRDKNGDQKTM) form a disordered region. Residues 34–47 (SSDRSRDKNGDQKT) show a composition bias toward basic and acidic residues. In terms of domain architecture, bZIP spans 44–107 (DQKTMRRLAQ…SSADQSHSMS (64 aa)). A basic motif region spans residues 46–66 (KTMRRLAQNREAARKSRLRKK). A coiled-coil region spans residues 47 to 142 (TMRRLAQNRE…RAAVNAHAGD (96 aa)). The segment at 72-86 (LENSRLKLTQLEQEL) is leucine-zipper. Positions 111–329 (ALAFDTEYAR…RALSSLWLAR (219 aa)) constitute a DOG1 domain.

It belongs to the bZIP family. Binds DNA as a dimer.

The protein resides in the nucleus. Functionally, transcriptional activator that binds specifically to the DNA sequence 5'-TGACG-3'. Recognizes ocs elements like the as-1 motif of the cauliflower mosaic virus 35S promoter. Binding to the as-1-like cis elements mediate auxin- and salicylic acid-inducible transcription. Binds to the hexamer motif 5'-ACGTCA-3' of histone gene promoters. This is Transcription factor HBP-1b(c38) from Triticum aestivum (Wheat).